The primary structure comprises 860 residues: MAASRSAGEAGPGGSQGRVVRMKRRGGRGPRRGPAGGGEKALKRLKLAVEEFVHATSEGEAPGGCEGRGAPVSFRPGGRKSRKELRKEKRHLRKARRLQRTAGPEQGPGLGGRSGAEEASGHRQDTEERARPAPSRDPSPPRKPRPSRVKAKATAATAKTRPSAAATAAARKRALLAANEEEDREIRKLERCLGLNKRKKKDGSSSVPLSFARDGLDYILGALESGKNSGLYDSSGEEEEDAGQTLPESDLESDSQDESEEEEEGDVEKEKKAQEAEAQSEDDDEDTEEEQGEEKEKGAQEKRRGKRVRFAEDEEKSENSSEDGDITDKSLCGSGEKYIPPHVRQAEETVDFKKKEELERLKKHVKGLLNRLSEPNMASISGQLEELYMAHSRKDMNDTLTSALMGACVTASAMPSRLMMEHVLLVSILHHTVGIEVGAHFLEAVVRKFDAIYKYGSEGKECDNLFTVIAHLYNFHVVQSLLIFDILKKLIGTFTEKDIELILLMLKNVGFSLRKDDALSLKELITEAQTKASGAGSEFQDQTRIRFMLETMLALKNNDMRKIPGYDPEPVEKLRKLQRALVRNAGSGSETQLRVSWDSVLSAEQTGRWWIVGSAWSGAPMIDNSHHTHLQKQLVGTVSSKILELARKQRMNTDIRRNIFCTIMTSEDFLDAFEKLLKLGLKDQQEREIIHVLMDCCLQEKTYNPFYAFLASKFCEYERRFQMTFQFSIWDKFRDLENLPATNFSNLVHLVAHLLKTKSLSLSILKVVEFSELDKPRVRFLRKVLSILLMETEVEDLSLIFTRVSDNPKLGVLREGLKLFISHFLLKNAQAHRSADEANVLREKADLATKCLQGKASLRM.

3 disordered regions span residues 1-172 (MAAS…AARK), 191-211 (RCLG…PLSF), and 226-339 (GKNS…EKYI). The interval 1-269 (MAASRSAGEA…EEEEEGDVEK (269 aa)) is necessary for nucleolar localization and for targeting PPP1CA to the nucleolus. Basic residues predominate over residues 20 to 31 (VRMKRRGGRGPR). Ser57 is subject to Phosphoserine. Over residues 77 to 99 (GGRKSRKELRKEKRHLRKARRLQ) the composition is skewed to basic residues. Positions 115–131 (GAEEASGHRQDTEERAR) are enriched in basic and acidic residues. Ser139 carries the phosphoserine modification. The span at 142–151 (RKPRPSRVKA) shows a compositional bias: basic residues. Over residues 152 to 169 (KATAATAKTRPSAAATAA) the composition is skewed to low complexity. Composition is skewed to acidic residues over residues 249–267 (SDLE…EGDV) and 278–293 (AQSE…EQGE). Positions 307 to 310 (RVRF) match the Required for efficient binding to PPP1CA and for targeting PPP1CA to the nucleolus motif. The span at 312 to 325 (EDEEKSENSSEDGD) shows a compositional bias: acidic residues. A phosphoserine mark is found at Ser317, Ser320, and Ser321. The MIF4G domain maps to 362 to 559 (KKHVKGLLNR…ETMLALKNND (198 aa)). Residues 654–770 (DIRRNIFCTI…SLSILKVVEF (117 aa)) form the MI domain.

The protein belongs to the CWC22 family. As to quaternary structure, may interact with EIF4A1, EIF4A2 and EIF4A3. Interacts with PPP1CA and PPP1CC. As to expression, expressed in heart and skeletal muscle.

It is found in the nucleus. It localises to the nucleolus. Plays a role in targeting PPP1CA to the nucleolus. The polypeptide is Nucleolar MIF4G domain-containing protein 1 (NOM1) (Homo sapiens (Human)).